The primary structure comprises 168 residues: Small ribosomal subunit protein uS7c (168 aa).

It belongs to the universal ribosomal protein uS7 family. Part of the 30S ribosomal subunit.

It is found in the plastid. Its subcellular location is the chloroplast. In terms of biological role, one of the primary rRNA binding proteins, it binds directly to 16S rRNA where it nucleates assembly of the head domain of the 30S subunit. The chain is Small ribosomal subunit protein uS7c (rps7) from Chlamydomonas reinhardtii (Chlamydomonas smithii).